We begin with the raw amino-acid sequence, 162 residues long: NADPH-dependent 7-cyano-7-deazaguanine reductase (162 aa).

The Thioimide intermediate role is filled by Cys-53. Asp-60 serves as the catalytic Proton donor. Residues 75–77 (VES) and 94–95 (HE) contribute to the substrate site.

It belongs to the GTP cyclohydrolase I family. QueF type 1 subfamily.

The protein resides in the cytoplasm. It carries out the reaction 7-aminomethyl-7-carbaguanine + 2 NADP(+) = 7-cyano-7-deazaguanine + 2 NADPH + 3 H(+). Its pathway is tRNA modification; tRNA-queuosine biosynthesis. Its function is as follows. Catalyzes the NADPH-dependent reduction of 7-cyano-7-deazaguanine (preQ0) to 7-aminomethyl-7-deazaguanine (preQ1). This chain is NADPH-dependent 7-cyano-7-deazaguanine reductase, found in Streptococcus mutans serotype c (strain ATCC 700610 / UA159).